Consider the following 449-residue polypeptide: 3-phosphoshikimate 1-carboxyvinyltransferase (449 aa).

Residues K28, S29, and R33 each contribute to the 3-phosphoshikimate site. Phosphoenolpyruvate is bound at residue K28. 2 residues coordinate phosphoenolpyruvate: G105 and R133. S179, Q181, D332, and K359 together coordinate 3-phosphoshikimate. Q181 is a binding site for phosphoenolpyruvate. Residue D332 is the Proton acceptor of the active site. The phosphoenolpyruvate site is built by R363 and R406.

Belongs to the EPSP synthase family. Monomer.

Its subcellular location is the cytoplasm. The catalysed reaction is 3-phosphoshikimate + phosphoenolpyruvate = 5-O-(1-carboxyvinyl)-3-phosphoshikimate + phosphate. Its pathway is metabolic intermediate biosynthesis; chorismate biosynthesis; chorismate from D-erythrose 4-phosphate and phosphoenolpyruvate: step 6/7. Functionally, catalyzes the transfer of the enolpyruvyl moiety of phosphoenolpyruvate (PEP) to the 5-hydroxyl of shikimate-3-phosphate (S3P) to produce enolpyruvyl shikimate-3-phosphate and inorganic phosphate. In Nitrobacter winogradskyi (strain ATCC 25391 / DSM 10237 / CIP 104748 / NCIMB 11846 / Nb-255), this protein is 3-phosphoshikimate 1-carboxyvinyltransferase.